A 416-amino-acid chain; its full sequence is Pre-mRNA-splicing factor slu-7 (416 aa).

The segment at 1-34 is disordered; that stretch reads MPPPPPNRREQATAAPSSTDKSETGAGAARKEDN. Residues 95–112 form a CCHC-type zinc finger; the sequence is GACENCGAMGHKKKDCLE. Composition is skewed to basic and acidic residues over residues 168–179 and 188–213; these read RRALQGDQKTPD and DDKS…QSMR. Residues 168-213 are disordered; the sequence is RRALQGDQKTPDGEGADGPEDDKSGFKYDEESDMGRDRATTKQSMR.

Belongs to the SLU7 family. As to quaternary structure, associated with the spliceosome.

Its subcellular location is the nucleus. Its function is as follows. Involved in pre-mRNA splicing. The protein is Pre-mRNA-splicing factor slu-7 (slu-7) of Neurospora crassa (strain ATCC 24698 / 74-OR23-1A / CBS 708.71 / DSM 1257 / FGSC 987).